The primary structure comprises 181 residues: Trafficking protein particle complex subunit 3 homolog (181 aa).

Cys70 carries the S-palmitoyl cysteine lipid modification.

This sequence belongs to the TRAPP small subunits family. BET3 subfamily. As to quaternary structure, homodimer. Part of the multisubunit TRAPP (transport protein particle) complex.

The protein resides in the golgi apparatus. It localises to the cis-Golgi network. It is found in the endoplasmic reticulum. Its function is as follows. May play a role in vesicular transport from endoplasmic reticulum to Golgi. Required for the systemic spread of the RNAi response. This is Trafficking protein particle complex subunit 3 homolog (trpp-3) from Caenorhabditis elegans.